The sequence spans 87 residues: Cell division protein ZapA (87 aa).

A coiled-coil region spans residues 64–87 (VHDYIKLKEEYDRLLQKLHKEKDE).

This sequence belongs to the ZapA family. Type 2 subfamily. In terms of assembly, homodimer. Interacts with FtsZ.

It is found in the cytoplasm. Functionally, activator of cell division through the inhibition of FtsZ GTPase activity, therefore promoting FtsZ assembly into bundles of protofilaments necessary for the formation of the division Z ring. It is recruited early at mid-cell but it is not essential for cell division. The protein is Cell division protein ZapA of Geobacillus sp. (strain WCH70).